The chain runs to 147 residues: Deoxyuridine 5'-triphosphate nucleotidohydrolase (147 aa).

Substrate-binding positions include 67–69 (RSG), N80, and 84–86 (TID).

This sequence belongs to the dUTPase family. The cofactor is Mg(2+).

The catalysed reaction is dUTP + H2O = dUMP + diphosphate + H(+). The protein operates within pyrimidine metabolism; dUMP biosynthesis; dUMP from dCTP (dUTP route): step 2/2. Its function is as follows. This enzyme is involved in nucleotide metabolism: it produces dUMP, the immediate precursor of thymidine nucleotides and it decreases the intracellular concentration of dUTP so that uracil cannot be incorporated into DNA. The protein is Deoxyuridine 5'-triphosphate nucleotidohydrolase of Anaeromyxobacter dehalogenans (strain 2CP-1 / ATCC BAA-258).